Here is a 184-residue protein sequence, read N- to C-terminus: Ras-related protein Rap-1b (184 aa).

Residue 10-17 (GSGGVGKS) participates in GTP binding. Positions 32-40 (YDPTIEDSY) match the Effector region motif. Residues 57 to 61 (DTAGT) and 116 to 119 (NKCD) each bind GTP. At Cys181 the chain carries Cysteine methyl ester. Cys181 carries S-geranylgeranyl cysteine lipidation. Residues 182 to 184 (HLL) constitute a propeptide, removed in mature form.

It belongs to the small GTPase superfamily. Ras family.

Its subcellular location is the cell membrane. It localises to the cytoplasm. The protein resides in the cytosol. It is found in the cell junction. It catalyses the reaction GTP + H2O = GDP + phosphate + H(+). In terms of biological role, probable GTP-binding protein that possesses GTPase activity. May play a role in endothelial cell polarity and endothelial barrier function. The polypeptide is Ras-related protein Rap-1b (rap1b) (Xenopus laevis (African clawed frog)).